The following is an 820-amino-acid chain: Phenylalanine--tRNA ligase beta subunit (820 aa).

The tRNA-binding domain occupies 42–154 (KGGLEGLVIG…EDAVPGTLAK (113 aa)). Positions 413 to 489 (AQDFIVELTY…RIYGYNNVEI (77 aa)) constitute a B5 domain. Mg(2+) contacts are provided by Asp-467, Asp-473, Glu-476, and Asp-477. The 94-residue stretch at 727–820 (SKFPAVKRDL…LEDKLGAKLR (94 aa)) folds into the FDX-ACB domain.

Belongs to the phenylalanyl-tRNA synthetase beta subunit family. Type 1 subfamily. As to quaternary structure, tetramer of two alpha and two beta subunits. Mg(2+) serves as cofactor.

The protein resides in the cytoplasm. The enzyme catalyses tRNA(Phe) + L-phenylalanine + ATP = L-phenylalanyl-tRNA(Phe) + AMP + diphosphate + H(+). The polypeptide is Phenylalanine--tRNA ligase beta subunit (Bacteroides fragilis (strain YCH46)).